The chain runs to 298 residues: tRNA dimethylallyltransferase (298 aa).

10-17 (GPTASGKT) contributes to the ATP binding site. Position 12 to 17 (12 to 17 (TASGKT)) interacts with substrate. The interaction with substrate tRNA stretch occupies residues 35–38 (DSMC).

Belongs to the IPP transferase family. As to quaternary structure, monomer. Mg(2+) is required as a cofactor.

The enzyme catalyses adenosine(37) in tRNA + dimethylallyl diphosphate = N(6)-dimethylallyladenosine(37) in tRNA + diphosphate. Functionally, catalyzes the transfer of a dimethylallyl group onto the adenine at position 37 in tRNAs that read codons beginning with uridine, leading to the formation of N6-(dimethylallyl)adenosine (i(6)A). This is tRNA dimethylallyltransferase from Hydrogenobaculum sp. (strain Y04AAS1).